The following is a 231-amino-acid chain: Flagellar L-ring protein (231 aa).

An N-terminal signal peptide occupies residues 1-18 (MNRLLSVFALGGAVLLAG). A lipid anchor (N-palmitoyl cysteine) is attached at cysteine 19. Cysteine 19 is lipidated: S-diacylglycerol cysteine.

Belongs to the FlgH family. The basal body constitutes a major portion of the flagellar organelle and consists of four rings (L,P,S, and M) mounted on a central rod.

Its subcellular location is the cell outer membrane. The protein resides in the bacterial flagellum basal body. Functionally, assembles around the rod to form the L-ring and probably protects the motor/basal body from shearing forces during rotation. The polypeptide is Flagellar L-ring protein (Pseudomonas putida (strain ATCC 700007 / DSM 6899 / JCM 31910 / BCRC 17059 / LMG 24140 / F1)).